Here is a 707-residue protein sequence, read N- to C-terminus: UvrABC system protein C (707 aa).

In terms of domain architecture, GIY-YIG spans 14–94 (AEPGCYLMKD…IKKHRPRFNV (81 aa)). The UVR domain occupies 206 to 241 (GELVERLRGRMAGAAEGLRFEEAARLRDQLQAVERS). The disordered stretch occupies residues 654-684 (PDAPPAAADEPSGAPEGTPAGGPAEAIPDAA). The segment covering 658 to 684 (PAAADEPSGAPEGTPAGGPAEAIPDAA) has biased composition (low complexity).

The protein belongs to the UvrC family. As to quaternary structure, interacts with UvrB in an incision complex.

It localises to the cytoplasm. Its function is as follows. The UvrABC repair system catalyzes the recognition and processing of DNA lesions. UvrC both incises the 5' and 3' sides of the lesion. The N-terminal half is responsible for the 3' incision and the C-terminal half is responsible for the 5' incision. In Anaeromyxobacter dehalogenans (strain 2CP-C), this protein is UvrABC system protein C.